The chain runs to 404 residues: Cysteine desulfurase IscS (404 aa).

Pyridoxal 5'-phosphate-binding positions include 75–76 (AT), asparagine 155, glutamine 183, and 203–205 (SSH). N6-(pyridoxal phosphate)lysine is present on lysine 206. Pyridoxal 5'-phosphate is bound at residue threonine 243. Residue cysteine 328 is the Cysteine persulfide intermediate of the active site. Cysteine 328 serves as a coordination point for [2Fe-2S] cluster.

The protein belongs to the class-V pyridoxal-phosphate-dependent aminotransferase family. NifS/IscS subfamily. In terms of assembly, homodimer. Forms a heterotetramer with IscU, interacts with other sulfur acceptors. Pyridoxal 5'-phosphate is required as a cofactor.

The protein resides in the cytoplasm. It catalyses the reaction (sulfur carrier)-H + L-cysteine = (sulfur carrier)-SH + L-alanine. It functions in the pathway cofactor biosynthesis; iron-sulfur cluster biosynthesis. Functionally, master enzyme that delivers sulfur to a number of partners involved in Fe-S cluster assembly, tRNA modification or cofactor biosynthesis. Catalyzes the removal of elemental sulfur atoms from cysteine to produce alanine. Functions as a sulfur delivery protein for Fe-S cluster synthesis onto IscU, an Fe-S scaffold assembly protein, as well as other S acceptor proteins. The sequence is that of Cysteine desulfurase IscS from Haemophilus influenzae (strain PittGG).